The sequence spans 622 residues: 1-deoxy-D-xylulose-5-phosphate synthase (622 aa).

Thiamine diphosphate-binding positions include histidine 74 and 115 to 117 (GHS). Aspartate 146 provides a ligand contact to Mg(2+). Thiamine diphosphate contacts are provided by residues 147–148 (GA), asparagine 177, phenylalanine 285, and glutamate 366. Mg(2+) is bound at residue asparagine 177.

Belongs to the transketolase family. DXPS subfamily. As to quaternary structure, homodimer. Mg(2+) serves as cofactor. The cofactor is thiamine diphosphate.

It carries out the reaction D-glyceraldehyde 3-phosphate + pyruvate + H(+) = 1-deoxy-D-xylulose 5-phosphate + CO2. The protein operates within metabolic intermediate biosynthesis; 1-deoxy-D-xylulose 5-phosphate biosynthesis; 1-deoxy-D-xylulose 5-phosphate from D-glyceraldehyde 3-phosphate and pyruvate: step 1/1. Its function is as follows. Catalyzes the acyloin condensation reaction between C atoms 2 and 3 of pyruvate and glyceraldehyde 3-phosphate to yield 1-deoxy-D-xylulose-5-phosphate (DXP). In Magnetococcus marinus (strain ATCC BAA-1437 / JCM 17883 / MC-1), this protein is 1-deoxy-D-xylulose-5-phosphate synthase.